The chain runs to 451 residues: Threonylcarbamoyladenosine tRNA methylthiotransferase MtaB (451 aa).

The 113-residue stretch at 2-114 folds into the MTTase N-terminal domain; sequence ATVAFHTLGC…MLGYIDQYRE (113 aa). Cys11, Cys47, Cys78, Cys153, Cys157, and Cys160 together coordinate [4Fe-4S] cluster. Residues 139 to 369 enclose the Radical SAM core domain; that stretch reads FTDRTRASLK…IALSDQLAKE (231 aa). The TRAM domain maps to 372-437; it reads SQYENEVLEI…YPYNEGQFVR (66 aa).

The protein belongs to the methylthiotransferase family. MtaB subfamily. Requires [4Fe-4S] cluster as cofactor.

The protein localises to the cytoplasm. It catalyses the reaction N(6)-L-threonylcarbamoyladenosine(37) in tRNA + (sulfur carrier)-SH + AH2 + 2 S-adenosyl-L-methionine = 2-methylsulfanyl-N(6)-L-threonylcarbamoyladenosine(37) in tRNA + (sulfur carrier)-H + 5'-deoxyadenosine + L-methionine + A + S-adenosyl-L-homocysteine + 2 H(+). Functionally, catalyzes the methylthiolation of N6-threonylcarbamoyladenosine (t(6)A), leading to the formation of 2-methylthio-N6-threonylcarbamoyladenosine (ms(2)t(6)A) at position 37 in tRNAs that read codons beginning with adenine. The protein is Threonylcarbamoyladenosine tRNA methylthiotransferase MtaB (mtaB) of Bacillus subtilis (strain 168).